The primary structure comprises 356 residues: MRVLGIETSCDETAAAVVTEGGDVLSDVVRSQVALHAPYGGVVPEVAARDHARAVVPVVREALSRAGVSAADLDGIAVTSRPGLAGALLVGLQAAKGLAWAAGKPLVGVDHLVGHLLAVFLRRGGAPLSDERERPSFPYVALLASGGHTAIYRVDGPALGAIRELGATRDDAAGEAFDKVAKLLGLGYPGGPVVDRLAAGGDAAAAADAVPALMARKESLEFSFSGIKSSVARHVAKRGRPEGQALRDLCAAFQGAVVDALVQKTVRAARAEGIGRVVLGGGVAANQGLRAKMAAACERRGLALFVPPLASCTDNGAMIAYAGALRLAAGERDTLDLAPETRTALPRVTRKGGGAR.

Fe cation contacts are provided by His-111 and His-115. Residues 143 to 147 (LASGG), Asp-178, Gly-191, Asp-195, and Asn-286 each bind substrate. Fe cation is bound at residue Asp-314.

It belongs to the KAE1 / TsaD family. Requires Fe(2+) as cofactor.

It is found in the cytoplasm. The enzyme catalyses L-threonylcarbamoyladenylate + adenosine(37) in tRNA = N(6)-L-threonylcarbamoyladenosine(37) in tRNA + AMP + H(+). In terms of biological role, required for the formation of a threonylcarbamoyl group on adenosine at position 37 (t(6)A37) in tRNAs that read codons beginning with adenine. Is involved in the transfer of the threonylcarbamoyl moiety of threonylcarbamoyl-AMP (TC-AMP) to the N6 group of A37, together with TsaE and TsaB. TsaD likely plays a direct catalytic role in this reaction. This chain is tRNA N6-adenosine threonylcarbamoyltransferase, found in Sorangium cellulosum (strain So ce56) (Polyangium cellulosum (strain So ce56)).